The primary structure comprises 262 residues: Hemin import ATP-binding protein HmuV (262 aa).

Residues 2–241 (IRASDISVRL…ETMEAVFGCR (240 aa)) enclose the ABC transporter domain. Position 34 to 41 (34 to 41 (GPNGSGKT)) interacts with ATP.

Belongs to the ABC transporter superfamily. Heme (hemin) importer (TC 3.A.1.14.5) family. In terms of assembly, the complex is composed of two ATP-binding proteins (HmuV), two transmembrane proteins (HmuU) and a solute-binding protein (HmuT).

Its subcellular location is the cell inner membrane. In terms of biological role, part of the ABC transporter complex HmuTUV involved in hemin import. Responsible for energy coupling to the transport system. The sequence is that of Hemin import ATP-binding protein HmuV from Rhizobium meliloti (strain 1021) (Ensifer meliloti).